A 506-amino-acid chain; its full sequence is Lysine--tRNA ligase (506 aa).

Positions 415 and 422 each coordinate Mg(2+).

It belongs to the class-II aminoacyl-tRNA synthetase family. As to quaternary structure, homodimer. Mg(2+) is required as a cofactor.

The protein localises to the cytoplasm. It catalyses the reaction tRNA(Lys) + L-lysine + ATP = L-lysyl-tRNA(Lys) + AMP + diphosphate. In Buchnera aphidicola subsp. Acyrthosiphon pisum (strain APS) (Acyrthosiphon pisum symbiotic bacterium), this protein is Lysine--tRNA ligase (lysS).